Consider the following 700-residue polypeptide: Acetoacetyl-CoA synthetase (700 aa).

The segment at 1–35 (MTAVSANGKTTEKHENGAHTNGTTNGTTNGSMNGN) is disordered. The segment covering 18–35 (AHTNGTTNGTTNGSMNGN) has biased composition (low complexity).

The protein belongs to the ATP-dependent AMP-binding enzyme family. In terms of tissue distribution, present in most cells of the organism.

The protein localises to the cytoplasm. Its subcellular location is the nucleus. The enzyme catalyses acetoacetate + ATP + CoA = acetoacetyl-CoA + AMP + diphosphate. Functionally, activates acetoacetate to acetoacetyl-CoA. Negatively regulates let-60 Ras activity during vulval induction. The protein is Acetoacetyl-CoA synthetase (sur-5) of Caenorhabditis elegans.